A 1076-amino-acid polypeptide reads, in one-letter code: Cytadherence high molecular weight protein 3 (1076 aa).

Residues 264–284 (QGYDQGYDQQYDQQGYDQQGY) are fibronectin-binding. The span at 326–335 (QQPVEVAKPA) shows a compositional bias: low complexity. Residues 326–351 (QQPVEVAKPAPTKPVGPKPQPGKKAT) form a disordered region. The segment covering 336 to 345 (PTKPVGPKPQ) has biased composition (pro residues). The stretch at 562 to 616 (EITKLEELVEIKTDNTESLNKLETLIDENKKIIDQFKQLKEEAKKSNSNINLEKV) forms a coiled coil. Disordered regions lie at residues 789 to 808 (SREHEQVQPKAQHQQPTTRI) and 850 to 873 (RINPQDSYYDQGYEQPDPYQEQQP). Polar residues predominate over residues 797 to 806 (PKAQHQQPTT). Low complexity predominate over residues 862 to 873 (YEQPDPYQEQQP).

The protein resides in the cell projection. Its subcellular location is the attachment organelle membrane. Binds immobilized fibronectin. Functionally, component of the cytoskeleton-like structure which stabilizes the shape of the wall-less mycoplasma. This cytoskeleton-like network of accessory proteins containing HMW proteins 1 to 5 allows the proper anchoring of cytadhesin proteins in the mycoplasmal membrane at the attachment organelle. Essential for successful surface parasitism. This Mycoplasmoides gallisepticum (strain R(low / passage 15 / clone 2)) (Mycoplasma gallisepticum) protein is Cytadherence high molecular weight protein 3 (hlp3).